Here is a 106-residue protein sequence, read N- to C-terminus: UPF0145 protein PputGB1_2909 (106 aa).

Belongs to the UPF0145 family.

In Pseudomonas putida (strain GB-1), this protein is UPF0145 protein PputGB1_2909.